A 265-amino-acid polypeptide reads, in one-letter code: uncharacterized protein (265 aa).

This is an uncharacterized protein from Saccharolobus islandicus (Sulfolobus islandicus).